A 302-amino-acid polypeptide reads, in one-letter code: MTTSRFATFDIESETGLTPGAYPAPLPTLEQQLHDRNAILAAIPSLARAKLDAATLKRRFANFLLTLGMVGTTSKGSYEELIIPPVKGMGSSTGFRARELVQIITSSPAPPGFDGNQTLRQFARPYAPQVQNMIAQGKFKTNLYDKYGKSVGAPPHVCIDFNDAMDLQMFHSTAEFESAHKVRELAIAEASARENAPRPAANPRAAKPIIGQTAPAFHSGDAAKQSGGQPVNIKPSLAQSAGFDSHRPPPETPPRAGTPSSQKSGQSGQTTIQPPASHGILSGMLGSHKSTPHSSPQQTPKK.

Residues Phe-217–Lys-302 are disordered. The segment covering Pro-254–Thr-271 has biased composition (low complexity). Residues His-288 to Lys-302 are compositionally biased toward polar residues.

It localises to the virion. Capsid protein self-assembles to form a flexuous, filamentous capsid (Potential). The capsid encapsulates the single-stranded RNA genome. The sequence is that of Capsid protein from Botryotinia fuckeliana (Noble rot fungus).